Reading from the N-terminus, the 1020-residue chain is Glycine dehydrogenase (decarboxylating), mitochondrial (1020 aa).

Residues 1-35 constitute a mitochondrion transit peptide; the sequence is MQSCARAWGLRLGRGVGGGRRLAGGSGPCWAPRSR. Residues 21–46 are disordered; sequence RLAGGSGPCWAPRSRDSSSGGGDSAA. Lys447, Lys514, Lys648, and Lys664 each carry N6-acetyllysine. N6-(pyridoxal phosphate)lysine is present on Lys754.

The protein belongs to the GcvP family. As to quaternary structure, homodimer. Interacts with GCSH. The glycine cleavage system is composed of four proteins: P (GLDC), T (GCST), L (DLD) and H (GCSH). The cofactor is pyridoxal 5'-phosphate.

The protein localises to the mitochondrion. The catalysed reaction is N(6)-[(R)-lipoyl]-L-lysyl-[glycine-cleavage complex H protein] + glycine + H(+) = N(6)-[(R)-S(8)-aminomethyldihydrolipoyl]-L-lysyl-[glycine-cleavage complex H protein] + CO2. Stimulated by lipoic acid. Inhibited in presence of methylamine. The glycine cleavage system catalyzes the degradation of glycine. The P protein (GLDC) binds the alpha-amino group of glycine through its pyridoxal phosphate cofactor; CO(2) is released and the remaining methylamine moiety is then transferred to the lipoamide cofactor of the H protein (GCSH). This is Glycine dehydrogenase (decarboxylating), mitochondrial from Homo sapiens (Human).